We begin with the raw amino-acid sequence, 368 residues long: Xaa-Pro dipeptidase (368 aa).

Residues aspartate 223, aspartate 234, histidine 298, glutamate 327, and glutamate 341 each coordinate Mn(2+).

Belongs to the peptidase M24B family. Requires Mn(2+) as cofactor.

The protein resides in the cytoplasm. The catalysed reaction is Xaa-L-Pro dipeptide + H2O = an L-alpha-amino acid + L-proline. This is Xaa-Pro dipeptidase (pepQ) from Lactobacillus delbrueckii subsp. lactis.